Consider the following 544-residue polypeptide: CTP synthase (544 aa).

The interval 1 to 265 (MTKFIFVTGG…DDIICEHLDL (265 aa)) is amidoligase domain. CTP is bound at residue S13. S13 is a binding site for UTP. ATP contacts are provided by residues 14–19 (SLGKGI) and D71. Residues D71 and E139 each contribute to the Mg(2+) site. Residues 146–148 (DIE), 186–191 (KTKPTQ), and K222 contribute to the CTP site. UTP is bound by residues 186–191 (KTKPTQ) and K222. Positions 290 to 542 (NIAMVGKYVD…VEAALAYQAD (253 aa)) constitute a Glutamine amidotransferase type-1 domain. G351 contacts L-glutamine. The active-site Nucleophile; for glutamine hydrolysis is C378. L-glutamine is bound by residues 379-382 (LGMQ), E402, and R469. Residues H515 and E517 contribute to the active site.

The protein belongs to the CTP synthase family. In terms of assembly, homotetramer.

The catalysed reaction is UTP + L-glutamine + ATP + H2O = CTP + L-glutamate + ADP + phosphate + 2 H(+). It carries out the reaction L-glutamine + H2O = L-glutamate + NH4(+). The enzyme catalyses UTP + NH4(+) + ATP = CTP + ADP + phosphate + 2 H(+). It participates in pyrimidine metabolism; CTP biosynthesis via de novo pathway; CTP from UDP: step 2/2. With respect to regulation, allosterically activated by GTP, when glutamine is the substrate; GTP has no effect on the reaction when ammonia is the substrate. The allosteric effector GTP functions by stabilizing the protein conformation that binds the tetrahedral intermediate(s) formed during glutamine hydrolysis. Inhibited by the product CTP, via allosteric rather than competitive inhibition. Catalyzes the ATP-dependent amination of UTP to CTP with either L-glutamine or ammonia as the source of nitrogen. Regulates intracellular CTP levels through interactions with the four ribonucleotide triphosphates. In Laribacter hongkongensis (strain HLHK9), this protein is CTP synthase.